A 131-amino-acid chain; its full sequence is Small ribosomal subunit protein uS11 (131 aa).

Belongs to the universal ribosomal protein uS11 family. As to quaternary structure, part of the 30S ribosomal subunit. Interacts with proteins S7 and S18. Binds to IF-3.

Located on the platform of the 30S subunit, it bridges several disparate RNA helices of the 16S rRNA. Forms part of the Shine-Dalgarno cleft in the 70S ribosome. This chain is Small ribosomal subunit protein uS11, found in Helicobacter acinonychis (strain Sheeba).